A 504-amino-acid chain; its full sequence is ATP synthase subunit alpha (504 aa).

171–178 (GDRATGKT) serves as a coordination point for ATP.

Belongs to the ATPase alpha/beta chains family. In terms of assembly, F-type ATPases have 2 components, CF(1) - the catalytic core - and CF(0) - the membrane proton channel. CF(1) has five subunits: alpha(3), beta(3), gamma(1), delta(1), epsilon(1). CF(0) has three main subunits: a(1), b(2) and c(9-12). The alpha and beta chains form an alternating ring which encloses part of the gamma chain. CF(1) is attached to CF(0) by a central stalk formed by the gamma and epsilon chains, while a peripheral stalk is formed by the delta and b chains.

It localises to the cell inner membrane. It carries out the reaction ATP + H2O + 4 H(+)(in) = ADP + phosphate + 5 H(+)(out). In terms of biological role, produces ATP from ADP in the presence of a proton gradient across the membrane. The alpha chain is a regulatory subunit. The sequence is that of ATP synthase subunit alpha from Sulfurihydrogenibium sp. (strain YO3AOP1).